The sequence spans 254 residues: Alcohol dehydrogenase (254 aa).

10–33 serves as a coordination point for NAD(+); that stretch reads FVAGLGGIGLETSREIVKSGPKNL. Ser-138 provides a ligand contact to substrate. The active-site Proton acceptor is the Tyr-151.

The protein belongs to the short-chain dehydrogenases/reductases (SDR) family. Homodimer.

The catalysed reaction is a primary alcohol + NAD(+) = an aldehyde + NADH + H(+). The enzyme catalyses a secondary alcohol + NAD(+) = a ketone + NADH + H(+). The protein is Alcohol dehydrogenase (Adh) of Scaptomyza crassifemur (Fruit fly).